Consider the following 821-residue polypeptide: MSLNLPNPSILGILLVVSTHSGPQLVFQYPPDLSNDSKKSSNLKRTNKTSTLQRKDSDSDELDIDDDDYIADNENDEEFVNADNDEEKEWDSRKMNYYLGTKSDLLSFLDEQEKFRQTSQERNKIYGHKQSDSHIDPDEIKSLHRNSKSGSSDKQIESPKLEASNSNNLKKTISSISDSQKSSTSKASTSGIPPVSPITSSTILGFEADYLCEMLCPPKQMCNSRFEIMIDDLVFLGLPIHSYDNGSWKSKHSHRPKSGKSSKGRSKNAADNASIDEGIDYETTSKSQSKNSMSMFHLVFIMNPPIIECNYRIDEMFHYVISRLSLVLRYEQSKHEYVWNQIRMIYNLKEEFRNQATMANLTKYLTDKSSLCKLISECFTQISRSNIANLSINNKLRSFQIPIKTEFHSLPDSTVPYLPGSHLSSTVNMLANTGLISVGETIRYDVNNLNSGGLDDFDDIDDNKSDSNADDIIYYALLLLDDPETIIRDIKAQQQSTLANFIRMIKPTESLLKLANKLKQQASDNGFSLDAGQIKSFAFHLIYWRRARVILPISTRSVYIVSPMAPITLKFHHDIFIFKKTFPALPSLPHFLKLLSNSSKPRQLATVIPSKDHRDAYLNALSWLIRYGYVTQLHTFIWLKISRKIKMKVEEDLENEGANNKRKKPSATADPNISNKLNAGTDNTSKTESNPEDIQRKMSQLRMINRNNNGNPTSYEQEIDNIEKKLLSPSIGLNLVLEDEGDTIIIDPGRASSLERRWINKVISEECNLSPELTVKFYELLKYMNGKNSLELLLLKENVSRQELRTLLFAIEDHIISVRHW.

A signal peptide spans 1-21 (MSLNLPNPSILGILLVVSTHS). 4 disordered regions span residues 29 to 64 (YPPD…ELDI), 116 to 194 (RQTS…GIPP), 246 to 283 (GSWK…DYET), and 654 to 694 (ENEG…PEDI). The segment covering 116–142 (RQTSQERNKIYGHKQSDSHIDPDEIKS) has biased composition (basic and acidic residues). Positions 170–192 (KKTISSISDSQKSSTSKASTSGI) are enriched in low complexity. A compositionally biased stretch (basic residues) spans 249-266 (KSKHSHRPKSGKSSKGRS). A compositionally biased stretch (polar residues) spans 669-688 (ADPNISNKLNAGTDNTSKTE).

The protein belongs to the NPR3 family.

Its function is as follows. Mediates inactivation of the TORC1 complex in response to amino acid starvation. Required for meiotic nuclear division. The sequence is that of Nitrogen permease regulator 3 (NPR3) from Debaryomyces hansenii (strain ATCC 36239 / CBS 767 / BCRC 21394 / JCM 1990 / NBRC 0083 / IGC 2968) (Yeast).